The chain runs to 292 residues: Ribosomal protein L11 methyltransferase (292 aa).

The S-adenosyl-L-methionine site is built by Thr-144, Gly-165, Asp-187, and Asn-229.

Belongs to the methyltransferase superfamily. PrmA family.

It localises to the cytoplasm. It carries out the reaction L-lysyl-[protein] + 3 S-adenosyl-L-methionine = N(6),N(6),N(6)-trimethyl-L-lysyl-[protein] + 3 S-adenosyl-L-homocysteine + 3 H(+). Functionally, methylates ribosomal protein L11. In Pseudomonas putida (strain ATCC 700007 / DSM 6899 / JCM 31910 / BCRC 17059 / LMG 24140 / F1), this protein is Ribosomal protein L11 methyltransferase.